We begin with the raw amino-acid sequence, 330 residues long: tRNA U34 carboxymethyltransferase (330 aa).

Carboxy-S-adenosyl-L-methionine is bound by residues lysine 91, tryptophan 105, lysine 110, glycine 130, 152-154, 181-182, methionine 196, tyrosine 200, and arginine 315; these read DPS and IE.

It belongs to the class I-like SAM-binding methyltransferase superfamily. CmoB family. As to quaternary structure, homotetramer.

The catalysed reaction is carboxy-S-adenosyl-L-methionine + 5-hydroxyuridine(34) in tRNA = 5-carboxymethoxyuridine(34) in tRNA + S-adenosyl-L-homocysteine + H(+). Catalyzes carboxymethyl transfer from carboxy-S-adenosyl-L-methionine (Cx-SAM) to 5-hydroxyuridine (ho5U) to form 5-carboxymethoxyuridine (cmo5U) at position 34 in tRNAs. The polypeptide is tRNA U34 carboxymethyltransferase (Shewanella halifaxensis (strain HAW-EB4)).